The chain runs to 126 residues: Glycine--tRNA ligase beta subunit (126 aa).

The protein belongs to the class-II aminoacyl-tRNA synthetase family. Tetramer of two alpha and two beta subunits.

The protein resides in the cytoplasm. The catalysed reaction is tRNA(Gly) + glycine + ATP = glycyl-tRNA(Gly) + AMP + diphosphate. The protein is Glycine--tRNA ligase beta subunit (glyS) of Neisseria gonorrhoeae.